The chain runs to 486 residues: ATP synthase subunit beta (486 aa).

An ATP-binding site is contributed by 171–178 (GGAGVGKT).

The protein belongs to the ATPase alpha/beta chains family. As to quaternary structure, F-type ATPases have 2 components, CF(1) - the catalytic core - and CF(0) - the membrane proton channel. CF(1) has five subunits: alpha(3), beta(3), gamma(1), delta(1), epsilon(1). CF(0) has three main subunits: a(1), b(2) and c(9-12). The alpha and beta chains form an alternating ring which encloses part of the gamma chain. CF(1) is attached to CF(0) by a central stalk formed by the gamma and epsilon chains, while a peripheral stalk is formed by the delta and b chains.

Its subcellular location is the cell membrane. The enzyme catalyses ATP + H2O + 4 H(+)(in) = ADP + phosphate + 5 H(+)(out). In terms of biological role, produces ATP from ADP in the presence of a proton gradient across the membrane. The catalytic sites are hosted primarily by the beta subunits. The chain is ATP synthase subunit beta from Salinispora tropica (strain ATCC BAA-916 / DSM 44818 / JCM 13857 / NBRC 105044 / CNB-440).